Consider the following 89-residue polypeptide: Inner kinetochore subunit mhf2 (89 aa).

It belongs to the CENP-X/MHF2 family. The MHF histone-fold complex is a heterotetramer of 2 mhf1-mhf2 heterodimers. Component of the inner kinetochore constitutive centromere-associated network (CCAN) (also known as central kinetochore Sim4 complex in fission yeast), which is composed of at least cnl2, cnp3, cnp20, fta1, fta2, fta3, fta4, fta6, fta7, mal2, mhf1, mhf2, mis6, mis15, mis17, sim4 and wip1.

The protein localises to the nucleus. The protein resides in the cytoplasm. Component of a FANCM-MHF complex that promotes gene conversion at blocked replication forks, probably by reversal of the stalled fork. FANCM-MHF promotes non-crossover recombination. This chain is Inner kinetochore subunit mhf2, found in Schizosaccharomyces pombe (strain 972 / ATCC 24843) (Fission yeast).